We begin with the raw amino-acid sequence, 288 residues long: Intermediate transcription factor 3 small subunit (288 aa).

This sequence belongs to the orthopoxvirus OPG134 family. As to quaternary structure, heterodimer of a 45 kDa (A23R) and a 32 kDa (A8R) subunit to form the virus intermediate transcription factor (VITF)-3.

Functionally, acts with RNA polymerase to initiate transcription from intermediate gene promoters. The protein is Intermediate transcription factor 3 small subunit (OPG134) of Homo sapiens (Human).